A 224-amino-acid polypeptide reads, in one-letter code: Ribosomal RNA small subunit methyltransferase G (224 aa).

S-adenosyl-L-methionine contacts are provided by residues Gly69, Leu74, 119-120 (AE), and Arg137.

The protein belongs to the methyltransferase superfamily. RNA methyltransferase RsmG family.

The protein resides in the cytoplasm. Its function is as follows. Specifically methylates the N7 position of guanine in position 518 of 16S rRNA. The polypeptide is Ribosomal RNA small subunit methyltransferase G (Mycobacterium bovis (strain ATCC BAA-935 / AF2122/97)).